The chain runs to 221 residues: Iron-sulfur cluster repair protein YtfE (221 aa).

The protein belongs to the RIC family. YtfE subfamily. In terms of assembly, homodimer.

The protein resides in the cytoplasm. Its function is as follows. Di-iron-containing protein involved in the repair of iron-sulfur clusters damaged by oxidative and nitrosative stress conditions. The polypeptide is Iron-sulfur cluster repair protein YtfE (Yersinia pestis bv. Antiqua (strain Antiqua)).